The chain runs to 266 residues: Hydroxyethylthiazole kinase (266 aa).

Residue methionine 46 participates in substrate binding. ATP-binding residues include arginine 122 and serine 168. Position 195 (glycine 195) interacts with substrate.

It belongs to the Thz kinase family. Requires Mg(2+) as cofactor.

The catalysed reaction is 5-(2-hydroxyethyl)-4-methylthiazole + ATP = 4-methyl-5-(2-phosphooxyethyl)-thiazole + ADP + H(+). It functions in the pathway cofactor biosynthesis; thiamine diphosphate biosynthesis; 4-methyl-5-(2-phosphoethyl)-thiazole from 5-(2-hydroxyethyl)-4-methylthiazole: step 1/1. In terms of biological role, catalyzes the phosphorylation of the hydroxyl group of 4-methyl-5-beta-hydroxyethylthiazole (THZ). The sequence is that of Hydroxyethylthiazole kinase from Oleidesulfovibrio alaskensis (strain ATCC BAA-1058 / DSM 17464 / G20) (Desulfovibrio alaskensis).